The sequence spans 650 residues: Acetyl-coenzyme A synthetase (650 aa).

CoA is bound by residues arginine 191–arginine 194, threonine 311, and asparagine 335. Residues glycine 387–proline 389, aspartate 411–threonine 416, aspartate 501, and arginine 516 each bind ATP. A CoA-binding site is contributed by serine 524. Arginine 527 contributes to the ATP binding site. Residues valine 538, histidine 540, and isoleucine 543 each contribute to the Mg(2+) site. Arginine 585 contacts CoA. Lysine 610 bears the N6-acetyllysine mark.

This sequence belongs to the ATP-dependent AMP-binding enzyme family. The cofactor is Mg(2+). Post-translationally, acetylated. Deacetylation by the SIR2-homolog deacetylase activates the enzyme.

It catalyses the reaction acetate + ATP + CoA = acetyl-CoA + AMP + diphosphate. Functionally, catalyzes the conversion of acetate into acetyl-CoA (AcCoA), an essential intermediate at the junction of anabolic and catabolic pathways. AcsA undergoes a two-step reaction. In the first half reaction, AcsA combines acetate with ATP to form acetyl-adenylate (AcAMP) intermediate. In the second half reaction, it can then transfer the acetyl group from AcAMP to the sulfhydryl group of CoA, forming the product AcCoA. The polypeptide is Acetyl-coenzyme A synthetase (Vibrio vulnificus (strain YJ016)).